The chain runs to 880 residues: Translation initiation factor IF-2 (880 aa).

Positions 1–251 (MVDTKNPGDK…PTAKPAPAKQ (251 aa)) are disordered. Residues 58-79 (PADAPAAPAPVAAAKPAPVRAP) are compositionally biased toward low complexity. Over residues 115 to 183 (ARIRDEEERK…KRFGEEEAKK (69 aa)) the composition is skewed to basic and acidic residues. 2 stretches are compositionally biased toward low complexity: residues 184-215 (AAAA…VAAD) and 233-250 (AARP…APAK). The tr-type G domain maps to 376–547 (PRSPVVTVMG…ALQAELLDLK (172 aa)). Residues 385-392 (GHVDHGKT) form a G1 region. Position 385–392 (385–392 (GHVDHGKT)) interacts with GTP. The segment at 410–414 (GITQH) is G2. Residues 433-436 (DTPG) form a G3 region. GTP contacts are provided by residues 433–437 (DTPGH) and 487–490 (NKID). The G4 stretch occupies residues 487–490 (NKID). A G5 region spans residues 523–525 (SAK).

It belongs to the TRAFAC class translation factor GTPase superfamily. Classic translation factor GTPase family. IF-2 subfamily.

It is found in the cytoplasm. Its function is as follows. One of the essential components for the initiation of protein synthesis. Protects formylmethionyl-tRNA from spontaneous hydrolysis and promotes its binding to the 30S ribosomal subunits. Also involved in the hydrolysis of GTP during the formation of the 70S ribosomal complex. The polypeptide is Translation initiation factor IF-2 (Rhodopseudomonas palustris (strain BisB18)).